A 216-amino-acid polypeptide reads, in one-letter code: Imidazole glycerol phosphate synthase subunit HisH (216 aa).

A Glutamine amidotransferase type-1 domain is found at 2–216; the sequence is RVAIIDYGSG…LIANFLKWKP (215 aa). C88 functions as the Nucleophile in the catalytic mechanism. Catalysis depends on residues H196 and E198.

Heterodimer of HisH and HisF.

It is found in the cytoplasm. It catalyses the reaction 5-[(5-phospho-1-deoxy-D-ribulos-1-ylimino)methylamino]-1-(5-phospho-beta-D-ribosyl)imidazole-4-carboxamide + L-glutamine = D-erythro-1-(imidazol-4-yl)glycerol 3-phosphate + 5-amino-1-(5-phospho-beta-D-ribosyl)imidazole-4-carboxamide + L-glutamate + H(+). It carries out the reaction L-glutamine + H2O = L-glutamate + NH4(+). Its pathway is amino-acid biosynthesis; L-histidine biosynthesis; L-histidine from 5-phospho-alpha-D-ribose 1-diphosphate: step 5/9. Functionally, IGPS catalyzes the conversion of PRFAR and glutamine to IGP, AICAR and glutamate. The HisH subunit catalyzes the hydrolysis of glutamine to glutamate and ammonia as part of the synthesis of IGP and AICAR. The resulting ammonia molecule is channeled to the active site of HisF. This chain is Imidazole glycerol phosphate synthase subunit HisH, found in Brucella suis biovar 1 (strain 1330).